An 85-amino-acid polypeptide reads, in one-letter code: Cell division topological specificity factor (85 aa).

This sequence belongs to the MinE family.

In terms of biological role, prevents the cell division inhibition by proteins MinC and MinD at internal division sites while permitting inhibition at polar sites. This ensures cell division at the proper site by restricting the formation of a division septum at the midpoint of the long axis of the cell. The chain is Cell division topological specificity factor from Cellvibrio japonicus (strain Ueda107) (Pseudomonas fluorescens subsp. cellulosa).